Reading from the N-terminus, the 600-residue chain is ATP-dependent lipid A-core flippase (600 aa).

The next 4 membrane-spanning stretches (helical) occupy residues 26-46, 82-102, 167-187, and 266-286; these read VGIFLLSILGFVIFASTQPML, LLIVLIAAWQGLGSFLGNYFL, VFLFIYLLMMNWKLTLVMLAI, and PMLQLVIYSAMAVLMFLVLFL. The region spanning 30-321 is the ABC transmembrane type-1 domain; it reads LLSILGFVIF…LSEVSSTIQK (292 aa). The ABC transporter domain occupies 353 to 589; the sequence is LEVKNLSFFY…NGYYARLHAM (237 aa). ATP is bound at residue 387–394; the sequence is GRSGSGKS.

This sequence belongs to the ABC transporter superfamily. Lipid exporter (TC 3.A.1.106) family. Homodimer.

The protein localises to the cell inner membrane. It carries out the reaction ATP + H2O + lipid A-core oligosaccharideSide 1 = ADP + phosphate + lipid A-core oligosaccharideSide 2.. In terms of biological role, involved in lipopolysaccharide (LPS) biosynthesis. Translocates lipid A-core from the inner to the outer leaflet of the inner membrane. Transmembrane domains (TMD) form a pore in the inner membrane and the ATP-binding domain (NBD) is responsible for energy generation. The protein is ATP-dependent lipid A-core flippase of Pseudomonas syringae pv. tomato (strain ATCC BAA-871 / DC3000).